Reading from the N-terminus, the 119-residue chain is UPF0342 protein Athe_0692 (119 aa).

The protein belongs to the UPF0342 family.

The sequence is that of UPF0342 protein Athe_0692 from Caldicellulosiruptor bescii (strain ATCC BAA-1888 / DSM 6725 / KCTC 15123 / Z-1320) (Anaerocellum thermophilum).